We begin with the raw amino-acid sequence, 332 residues long: Glycerol-3-phosphate dehydrogenase [NAD(P)+] (332 aa).

Residues W11, R30, and K108 each contribute to the NADPH site. Sn-glycerol 3-phosphate-binding residues include K108, G137, and S139. A141 lines the NADPH pocket. Sn-glycerol 3-phosphate contacts are provided by K192, D245, S255, R256, and N257. Residue K192 is the Proton acceptor of the active site. An NADPH-binding site is contributed by R256. The NADPH site is built by V280 and E282.

This sequence belongs to the NAD-dependent glycerol-3-phosphate dehydrogenase family.

It localises to the cytoplasm. The enzyme catalyses sn-glycerol 3-phosphate + NAD(+) = dihydroxyacetone phosphate + NADH + H(+). It catalyses the reaction sn-glycerol 3-phosphate + NADP(+) = dihydroxyacetone phosphate + NADPH + H(+). Its pathway is membrane lipid metabolism; glycerophospholipid metabolism. In terms of biological role, catalyzes the reduction of the glycolytic intermediate dihydroxyacetone phosphate (DHAP) to sn-glycerol 3-phosphate (G3P), the key precursor for phospholipid synthesis. This Burkholderia cenocepacia (strain ATCC BAA-245 / DSM 16553 / LMG 16656 / NCTC 13227 / J2315 / CF5610) (Burkholderia cepacia (strain J2315)) protein is Glycerol-3-phosphate dehydrogenase [NAD(P)+].